The following is a 218-amino-acid chain: Small ribosomal subunit protein uS3c (218 aa).

Residues 47 to 117 (VRTHIRNSSN…KLKITLSEID (71 aa)) form the KH type-2 domain.

The protein belongs to the universal ribosomal protein uS3 family. Part of the 30S ribosomal subunit.

It is found in the plastid. It localises to the chloroplast. The chain is Small ribosomal subunit protein uS3c (rps3) from Spirogyra maxima (Green alga).